A 781-amino-acid polypeptide reads, in one-letter code: Probable serine/threonine-protein kinase C70.05c (781 aa).

Disordered stretches follow at residues 1-315 and 368-417; these read MPSD…PLVS and YSGK…TNIS. Residues 21 to 31 are compositionally biased toward low complexity; sequence ESPSSRSIGSG. Residues 43–63 show a composition bias toward polar residues; the sequence is FKNSFLSRKNSSQIKSPSDYK. A compositionally biased stretch (basic and acidic residues) spans 64–73; it reads SSAHEQRVNH. Over residues 74 to 92 the composition is skewed to polar residues; the sequence is TTDSMAHVPGNNSPLQTPQ. Phosphoserine is present on S94. Residues 112 to 121 show a composition bias toward basic residues; it reads SRHHKPHHSG. 3 stretches are compositionally biased toward polar residues: residues 136–146, 161–195, and 206–228; these read SNANSPTSESP, KNTS…PNSR, and NSAS…SLSR. Phosphoserine is present on S253. Residues 272–304 show a composition bias toward low complexity; that stretch reads PLTASPTPSSPTGTPNSMSKSPSLSSLASTGAS. Over residues 379–406 the composition is skewed to polar residues; the sequence is NVGSSANTAPNSPTSANSSEGNQGNGPT. Residues 432-742 enclose the Protein kinase domain; that stretch reads AKRVVPRLSA…AQEALNLPFV (311 aa). ATP contacts are provided by residues 452–460 and K480; that span reads MGSGATAVI. The Proton acceptor role is filled by D584.

It belongs to the protein kinase superfamily. Ser/Thr protein kinase family.

The protein localises to the cytoplasm. The enzyme catalyses L-seryl-[protein] + ATP = O-phospho-L-seryl-[protein] + ADP + H(+). It carries out the reaction L-threonyl-[protein] + ATP = O-phospho-L-threonyl-[protein] + ADP + H(+). The polypeptide is Probable serine/threonine-protein kinase C70.05c (Schizosaccharomyces pombe (strain 972 / ATCC 24843) (Fission yeast)).